We begin with the raw amino-acid sequence, 413 residues long: Peptide chain release factor 1, mitochondrial (413 aa).

Position 287 is an N5-methylglutamine (Q287). The disordered stretch occupies residues 335 to 363 (RLEKEEKERKARKSQVSSTNRSDKIRTYN).

It belongs to the prokaryotic/mitochondrial release factor family. In terms of processing, methylation of glutamine in the GGQ triplet is conserved from bacteria to mammals. N5-methylated on Gln-287 by MTQ1.

The protein resides in the mitochondrion. Mitochondrial peptide chain release factor that directs the termination of translation in response to the peptide chain termination codons UAA and UAG. The polypeptide is Peptide chain release factor 1, mitochondrial (MRF1) (Saccharomyces cerevisiae (strain ATCC 204508 / S288c) (Baker's yeast)).